The primary structure comprises 483 residues: Glutamate--tRNA ligase (483 aa).

Residues 11 to 21 (PSPTGLLHIGN) carry the 'HIGH' region motif. Positions 255-259 (KLSKR) match the 'KMSKS' region motif. Lysine 258 contributes to the ATP binding site.

The protein belongs to the class-I aminoacyl-tRNA synthetase family. Glutamate--tRNA ligase type 1 subfamily. Monomer.

The protein localises to the cytoplasm. It carries out the reaction tRNA(Glu) + L-glutamate + ATP = L-glutamyl-tRNA(Glu) + AMP + diphosphate. Functionally, catalyzes the attachment of glutamate to tRNA(Glu) in a two-step reaction: glutamate is first activated by ATP to form Glu-AMP and then transferred to the acceptor end of tRNA(Glu). This is Glutamate--tRNA ligase from Lactococcus lactis subsp. lactis (strain IL1403) (Streptococcus lactis).